A 180-amino-acid chain; its full sequence is Inner membrane assembly complex subunit 17 (180 aa).

Residues 1-36 constitute a mitochondrion transit peptide; sequence MMIRNQLYRKCIIGGGRSILNGWVINGTVPNIGLRY. The Mitochondrial matrix portion of the chain corresponds to 37-105; it reads LRSGIVTRSN…RKTQDIPIKR (69 aa). A helical transmembrane segment spans residues 106–128; that stretch reads FIRPTWMFLLMSSTFYLLGHYIW. Residues 129–163 adopt a coiled-coil conformation; the sequence is WKLEYDEVEKELDRQVTALEEELHNLIEEHRVHGE. At 129–180 the chain is on the mitochondrial intermembrane side; sequence WKLEYDEVEKELDRQVTALEEELHNLIEEHRVHGENEAIKNKKHKHWYKFWS.

This sequence belongs to the INA17 family. As to quaternary structure, component of the inner membrane assembly (INA) complex, composed of INA17 and INA22. Interacts with a subset of F(1)F(0)-ATP synthase subunits of the F(1)-domain and the peripheral stalk.

It localises to the mitochondrion inner membrane. Component of the INA complex (INAC) that promotes the biogenesis of mitochondrial F(1)F(0)-ATP synthase. INAC facilitates the assembly of the peripheral stalk and promotes the assembly of the catalytic F(1)-domain with the membrane-embedded F(0)-domain. The sequence is that of Inner membrane assembly complex subunit 17 from Vanderwaltozyma polyspora (strain ATCC 22028 / DSM 70294 / BCRC 21397 / CBS 2163 / NBRC 10782 / NRRL Y-8283 / UCD 57-17) (Kluyveromyces polysporus).